Here is a 613-residue protein sequence, read N- to C-terminus: Kelch-like protein 21 (613 aa).

Residues 38-105 (FDVTLCAEGK…CYTGRVTVTH (68 aa)) form the BTB domain. Positions 140-242 (CLEIQDFAEA…RRFYLLAHVE (103 aa)) constitute a BACK domain. Kelch repeat units follow at residues 289 to 337 (ILVV…ALGN), 338 to 384 (DIYV…VLKG), 386 to 424 (LYVVGSDSTERYDHTIDCWEALPPMPHPMDNCSTTACRG), 426 to 472 (LYAI…TLNG), 474 to 514 (IYFV…ALGG), and 515 to 562 (RLYV…SIFR).

As to quaternary structure, component of the BCR(KLHL21) E3 ubiquitin ligase complex, at least composed of cul3, klhl21 and rbx1.

It localises to the cytoplasm. It is found in the cytoskeleton. The protein localises to the spindle. It functions in the pathway protein modification; protein ubiquitination. Substrate-specific adapter of BCR (BTB-CUL3-RBX1) E3 ubiquitin-protein ligase complex required for efficient chromosome alignment and cytokinesis. The BCR(KLHL21) E3 ubiquitin ligase complex regulates localization of the chromosomal passenger complex (CPC) from chromosomes to the spindle midzone in anaphase and mediates the ubiquitination of AURKB. In Danio rerio (Zebrafish), this protein is Kelch-like protein 21 (klhl21).